The sequence spans 109 residues: MEDRVEISMLMDFYSSLLTEKQRSVMALYYDDDLSLAEIAELNKTSRQAIHDLIKRCDKQLLSYESKLNLLQKSMRKEKYIMNFLEELKEKYSVSDKDYLMFKEKLENL.

This sequence belongs to the UPF0122 family.

In terms of biological role, might take part in the signal recognition particle (SRP) pathway. This is inferred from the conservation of its genetic proximity to ftsY/ffh. May be a regulatory protein. This chain is UPF0122 protein CLL_A1244, found in Clostridium botulinum (strain Eklund 17B / Type B).